The chain runs to 644 residues: Exoribonuclease 2 (644 aa).

The RNB domain maps to 189–516 (REDLTALDFV…NHRLLKAVIK (328 aa)). One can recognise an S1 motif domain in the interval 561-643 (DTRFAAEIVD…ETRSIIARPV (83 aa)).

It belongs to the RNR ribonuclease family. RNase II subfamily.

The protein localises to the cytoplasm. The catalysed reaction is Exonucleolytic cleavage in the 3'- to 5'-direction to yield nucleoside 5'-phosphates.. Involved in mRNA degradation. Hydrolyzes single-stranded polyribonucleotides processively in the 3' to 5' direction. In Shigella boydii serotype 18 (strain CDC 3083-94 / BS512), this protein is Exoribonuclease 2.